The following is a 155-amino-acid chain: 6,7-dimethyl-8-ribityllumazine synthase (155 aa).

Residues F23, 57-59, and 81-83 each bind 5-amino-6-(D-ribitylamino)uracil; these read AFE and AVI. Residue 86 to 87 participates in (2S)-2-hydroxy-3-oxobutyl phosphate binding; that stretch reads ST. H89 serves as the catalytic Proton donor. A 5-amino-6-(D-ribitylamino)uracil-binding site is contributed by F114. R128 lines the (2S)-2-hydroxy-3-oxobutyl phosphate pocket.

The protein belongs to the DMRL synthase family.

It carries out the reaction (2S)-2-hydroxy-3-oxobutyl phosphate + 5-amino-6-(D-ribitylamino)uracil = 6,7-dimethyl-8-(1-D-ribityl)lumazine + phosphate + 2 H2O + H(+). Its pathway is cofactor biosynthesis; riboflavin biosynthesis; riboflavin from 2-hydroxy-3-oxobutyl phosphate and 5-amino-6-(D-ribitylamino)uracil: step 1/2. In terms of biological role, catalyzes the formation of 6,7-dimethyl-8-ribityllumazine by condensation of 5-amino-6-(D-ribitylamino)uracil with 3,4-dihydroxy-2-butanone 4-phosphate. This is the penultimate step in the biosynthesis of riboflavin. This Geobacter metallireducens (strain ATCC 53774 / DSM 7210 / GS-15) protein is 6,7-dimethyl-8-ribityllumazine synthase.